Consider the following 475-residue polypeptide: Dynein regulatory complex subunit 4 (475 aa).

Residues 1-22 (MPPKRKSSPKGKTPTVVDGLST) are disordered. The regulates microtubule-binding stretch occupies residues 1 to 113 (MPPKRKSSPK…LLYEQQNMLS (113 aa)). Coiled coils occupy residues 20–104 (LSTE…VKHL), 142–200 (RSLK…QEEE), and 242–426 (KNLD…VARV). The microtubule-binding stretch occupies residues 114 to 257 (ELKAESIIST…TSLKEELKEM (144 aa)).

Belongs to the DRC4 family. In terms of assembly, component of the nexin-dynein regulatory complex (N-DRC). Interacts with microtubules.

It localises to the cytoplasm. The protein localises to the cytoskeleton. It is found in the cell projection. Its subcellular location is the cilium. The protein resides in the flagellum. It localises to the cilium axoneme. The protein localises to the cilium basal body. It is found in the golgi apparatus. Its subcellular location is the flagellum axoneme. Functionally, component of the nexin-dynein regulatory complex (N-DRC), a key regulator of ciliary/flagellar motility which maintains the alignment and integrity of the distal axoneme and regulates microtubule sliding in motile axonemes. Plays an important role in the assembly of the N-DRC linker. Plays dual roles at both the primary (or non-motile) cilia to regulate hedgehog signaling and in motile cilia to coordinate cilia movement. Required for proper slow muscle development and positively regulates ciliary smoothened (SMO)-dependent Hedgehog (Hh) signaling pathway. Required for tether cilia motility which is essential for normal otolith formation and localization in the developing inner ear. This chain is Dynein regulatory complex subunit 4 (gas8), found in Danio rerio (Zebrafish).